A 692-amino-acid chain; its full sequence is Elongation factor G 2 (692 aa).

Positions 8–283 constitute a tr-type G domain; the sequence is EKTRNIGIMA…AVIDYMPSPV (276 aa). Residues 17 to 24, 81 to 85, and 135 to 138 contribute to the GTP site; these read AHIDAGKT, DTPGH, and NKMD.

It belongs to the TRAFAC class translation factor GTPase superfamily. Classic translation factor GTPase family. EF-G/EF-2 subfamily.

It is found in the cytoplasm. Functionally, catalyzes the GTP-dependent ribosomal translocation step during translation elongation. During this step, the ribosome changes from the pre-translocational (PRE) to the post-translocational (POST) state as the newly formed A-site-bound peptidyl-tRNA and P-site-bound deacylated tRNA move to the P and E sites, respectively. Catalyzes the coordinated movement of the two tRNA molecules, the mRNA and conformational changes in the ribosome. This is Elongation factor G 2 from Syntrophotalea carbinolica (strain DSM 2380 / NBRC 103641 / GraBd1) (Pelobacter carbinolicus).